Here is a 480-residue protein sequence, read N- to C-terminus: Iron-sulfur cluster assembly SufBD family protein slr0074 (480 aa).

This sequence belongs to the iron-sulfur cluster assembly SufBD family.

This Synechocystis sp. (strain ATCC 27184 / PCC 6803 / Kazusa) protein is Iron-sulfur cluster assembly SufBD family protein slr0074.